A 290-amino-acid polypeptide reads, in one-letter code: MDIEAYFERIGYKNSRNKLDLETLTDILEHQIRAVPFENLNMHCGQAMELGLEAIFDHIVRRNRGGWCLQVNQLLYWALTTIGFQTTMLGGYFYIPPVNKYSTGMVHLLLQVTIDGRNYIVDAGSGSSSQMWQPLELISGKDQPQVPCIFCLTEERGIWYLDQIRREQYITNKEFLNSHLLPKKKHQKIYLFTLEPRTIEDFESMNTYLQTSPTSSFITTSFCSLQTPEGVYCLVGFILTYRKFNYKDNTDLVEFKTLTEEEVEEVLRNIFKISLGRNLVPKPGDGSLTI.

Cys-68 acts as the Acyl-thioester intermediate in catalysis. CoA-binding residues include Thr-103 and Gly-104. Val-106 to His-107 contributes to the substrate binding site. Active-site residues include His-107 and Asp-122. The CoA site is built by Tyr-208, Thr-214, and Ser-287.

This sequence belongs to the arylamine N-acetyltransferase family.

The protein resides in the cytoplasm. The catalysed reaction is an arylamine + acetyl-CoA = an N-acetylarylamine + CoA. The enzyme catalyses an N-hydroxyarylamine + acetyl-CoA = an N-acetoxyarylamine + CoA. Functionally, catalyzes the N- or O-acetylation of various arylamine and heterocyclic amine substrates. Participates in the detoxification of a plethora of hydrazine and arylamine drugs, and is able to bioactivate several known carcinogens. This chain is Arylamine N-acetyltransferase 2 (NAT2), found in Homo sapiens (Human).